A 98-amino-acid chain; its full sequence is NADH-ubiquinone oxidoreductase chain 4L (98 aa).

Helical transmembrane passes span 2–22 (TQAS…TLIF), 29–49 (TLLC…MTAL), and 61–81 (IVML…LAMI).

This sequence belongs to the complex I subunit 4L family. Core subunit of respiratory chain NADH dehydrogenase (Complex I) which is composed of 45 different subunits.

The protein resides in the mitochondrion inner membrane. It carries out the reaction a ubiquinone + NADH + 5 H(+)(in) = a ubiquinol + NAD(+) + 4 H(+)(out). Functionally, core subunit of the mitochondrial membrane respiratory chain NADH dehydrogenase (Complex I) which catalyzes electron transfer from NADH through the respiratory chain, using ubiquinone as an electron acceptor. Part of the enzyme membrane arm which is embedded in the lipid bilayer and involved in proton translocation. The sequence is that of NADH-ubiquinone oxidoreductase chain 4L (MT-ND4L) from Calomys musculinus (Drylands vesper mouse).